Consider the following 295-residue polypeptide: Ectoine dioxygenase (295 aa).

Q129 is a binding site for L-ectoine. K135 contacts 2-oxoglutarate. H146, D148, and H247 together coordinate Fe cation.

The protein belongs to the PhyH family. EctD subfamily. In terms of assembly, homodimer. Fe(2+) is required as a cofactor.

The enzyme catalyses L-ectoine + 2-oxoglutarate + O2 = 5-hydroxyectoine + succinate + CO2. In terms of biological role, involved in the biosynthesis of 5-hydroxyectoine, called compatible solute, which helps organisms to survive extreme osmotic stress by acting as a highly soluble organic osmolyte. Catalyzes the 2-oxoglutarate-dependent selective hydroxylation of L-ectoine to yield (4S,5S)-5-hydroxyectoine. In Streptomyces avermitilis (strain ATCC 31267 / DSM 46492 / JCM 5070 / NBRC 14893 / NCIMB 12804 / NRRL 8165 / MA-4680), this protein is Ectoine dioxygenase.